The following is a 1488-amino-acid chain: DNA polymerase alpha catalytic subunit (1488 aa).

Disordered regions lie at residues 1 to 22, 79 to 124, and 236 to 325; these read MSESPSEPRAKRQRVDKNGRFA, LRDF…TGKA, and FFSS…ESED. Residues 83–93 show a composition bias toward acidic residues; that stretch reads FEDEDEYSDGE. The Nuclear localization signal motif lies at 96–103; sequence RKDSKKKK. Over residues 99–113 the composition is skewed to basic residues; that stretch reads SKKKKGVAPNSKKRP. Residue Ser-239 is modified to Phosphoserine. Residues 242–258 show a composition bias toward basic and acidic residues; sequence IKKEPMPEKTPAKKATE. Residues 260-278 are compositionally biased toward acidic residues; that stretch reads PFSDNEMDFSCLDDDENQF. Phosphoserine occurs at positions 262 and 269. Over residues 286 to 303 the composition is skewed to polar residues; sequence TEKVSQTKTAAEKTSQSK. Residues 304-325 are compositionally biased toward basic and acidic residues; it reads VAEKSAPKKETTGSPKESESED. Thr-314 is subject to Phosphothreonine. Ser-317 carries the post-translational modification Phosphoserine. A contains conserved residues essential for 3' -&gt; 5' exonuclease activities region spans residues 638–758; it reads DSERALLSWF…DLLEMYEKGE (121 aa). 2 DNA-binding regions span residues 675-734 and 1255-1380; these read QIVA…CKQV and PTKF…RKKS. The Zn(2+) site is built by Cys-1296, Cys-1299, Cys-1324, Cys-1329, Cys-1362, Cys-1367, Cys-1385, and Cys-1388. A CysA-type zinc finger spans residues 1296 to 1327; it reads CVTCKTEQLMASAYRPGPSNSHIAVLQQCAKS. The CysB motif motif lies at 1362 to 1388; that stretch reads CDHPDCNFNTRTHSLRKKSHRPLCQKC.

It belongs to the DNA polymerase type-B family. As to quaternary structure, component of the alpha DNA polymerase complex (also known as the alpha DNA polymerase-primase complex) consisting of four subunits: the catalytic subunit PolA1, the regulatory subunit PolA2, and the primase complex subunits Prim1 and Prim2 respectively. PolA1 associates with the DNA primase complex before association with PolA2. Interacts with Dpit47; the interaction inhibits the activity of the DNA polymerase and occurs only in proliferating cells but not in quiescent cells. In terms of processing, in embryos, a cleaved form of 130 kDa is produced up to cycle 14 and then disappears. Expressed in embryos (at protein level).

The protein localises to the nucleus. It carries out the reaction DNA(n) + a 2'-deoxyribonucleoside 5'-triphosphate = DNA(n+1) + diphosphate. With respect to regulation, inhibited by N2-(p-n-butylphenyl) deoxyguanosine 5'-triphosphate and N2-(p-n-butylphenyl) deoxyadenosine 5'-triphosphate. DNA synthesis is not inhibited by fungal toxin alpha-amaitin. The 3'-5' exonuclease activity is inhibited by 10mM dGMP. Catalytic subunit of the DNA polymerase alpha complex (also known as the alpha DNA polymerase-primase complex) which plays an essential role in the initiation of DNA synthesis. During the S phase of the cell cycle, the DNA polymerase alpha complex (composed of a catalytic subunit PolA1, an accessory subunit PolA2 and two primase subunits, the catalytic subunit Prim1 and the regulatory subunit Prim2) is recruited to DNA at the replicative forks. The primase subunit of the polymerase alpha complex initiates DNA synthesis by oligomerising short RNA primers on both leading and lagging strands. These primers are initially extended by the polymerase alpha catalytic subunit and subsequently transferred to polymerase delta and polymerase epsilon for processive synthesis on the lagging and leading strand, respectively. In addition to polymerase activity, exhibits 3' to 5' exonuclease activity. The polypeptide is DNA polymerase alpha catalytic subunit (Drosophila melanogaster (Fruit fly)).